A 359-amino-acid polypeptide reads, in one-letter code: Peptide chain release factor 1 (359 aa).

An N5-methylglutamine modification is found at Gln-236.

The protein belongs to the prokaryotic/mitochondrial release factor family. Post-translationally, methylated by PrmC. Methylation increases the termination efficiency of RF1.

It is found in the cytoplasm. Its function is as follows. Peptide chain release factor 1 directs the termination of translation in response to the peptide chain termination codons UAG and UAA. The polypeptide is Peptide chain release factor 1 (Streptococcus pneumoniae serotype 19F (strain G54)).